Reading from the N-terminus, the 140-residue chain is Large ribosomal subunit protein uL11 (140 aa).

It belongs to the universal ribosomal protein uL11 family. As to quaternary structure, part of the ribosomal stalk of the 50S ribosomal subunit. Interacts with L10 and the large rRNA to form the base of the stalk. L10 forms an elongated spine to which L12 dimers bind in a sequential fashion forming a multimeric L10(L12)X complex. Post-translationally, one or more lysine residues are methylated.

Functionally, forms part of the ribosomal stalk which helps the ribosome interact with GTP-bound translation factors. The polypeptide is Large ribosomal subunit protein uL11 (Staphylococcus aureus (strain Mu3 / ATCC 700698)).